We begin with the raw amino-acid sequence, 408 residues long: BRCA1-A complex subunit Abraxas 1 (408 aa).

Residues threonine 7 to leucine 155 enclose the MPN domain. Residues alanine 210 to alanine 273 adopt a coiled-coil conformation. The segment covering leucine 360 to serine 372 has biased composition (polar residues). Residues leucine 360 to phenylalanine 408 form a disordered region. Serine 405 is modified (phosphoserine). The pSXXF motif signature appears at serine 405 to phenylalanine 408.

The protein belongs to the FAM175 family. Abraxas subfamily. Component of the BRCA1-A complex. Component of the BRISC complex. Interacts directly (when phosphorylated at Ser-405) with brca1. Homodimer. The phosphorylated homodimer can interact directly with two brca1 chains, giving rise to a heterotetramer. Phosphorylation of Ser-405 of the pSXXF motif by ATM or ATR constitutes a specific recognition motif for the BRCT domain of BRCA1.

Its subcellular location is the nucleus. Functionally, involved in DNA damage response and double-strand break (DSB) repair. Component of the BRCA1-A complex, acting as a central scaffold protein that assembles the various components of the complex and mediates the recruitment of brca1. The BRCA1-A complex specifically recognizes 'Lys-63'-linked ubiquitinated histones H2A and H2AX at DNA lesion sites, leading to target the brca1-bard1 heterodimer to sites of DNA damage at DSBs. This complex also possesses deubiquitinase activity that specifically removes 'Lys-63'-linked ubiquitin on histones H2A and H2AX. In Xenopus tropicalis (Western clawed frog), this protein is BRCA1-A complex subunit Abraxas 1.